The sequence spans 448 residues: Acyl-lipid (9-3)-desaturase (448 aa).

The Cytochrome b5 heme-binding domain occupies 6–90; that stretch reads KKYITSDELK…LKDYSVSEVS (85 aa). His-41 and His-64 together coordinate heme. Helical transmembrane passes span 112–132 and 137–157; these read IMFA…YGVL and VLVH…SGWI. Residues 159 to 163 carry the Histidine box-1 motif; it reads HDAGH. The chain crosses the membrane as a helical span at residues 172 to 192; the sequence is LNKFMGIFAANCLSGISIGWW. Residues 196-200 carry the Histidine box-2 motif; the sequence is HNAHH. 3 helical membrane passes run 212-232, 254-274, and 286-306; these read LQYI…TSHF, FYPI…IMLL, and LLGC…LPNW. The Histidine box-3 motif lies at 373–377; that stretch reads QIEHH.

This sequence belongs to the fatty acid desaturase type 1 family.

It is found in the endoplasmic reticulum membrane. It catalyses the reaction (9Z,12Z,15Z)-octadecatrienoyl-containing glycerolipid + 2 Fe(II)-[cytochrome b5] + O2 + 2 H(+) = (6Z,9Z,12Z,15Z)-octadecatetraenoyl-containing glycerolipid + 2 Fe(III)-[cytochrome b5] + 2 H2O. The enzyme catalyses a (9Z,12Z)-octadecadienoyl-containing glycerolipid + 2 Fe(II)-[cytochrome b5] + O2 + 2 H(+) = (6Z,9Z,12Z)-octadecatrienoyl-containing glycerolipid + 2 Fe(III)-[cytochrome b5] + 2 H2O. It functions in the pathway lipid metabolism; polyunsaturated fatty acid biosynthesis. Functionally, fatty acid desaturase able to introduce a delta(6)-double bond into delta(9)-unsaturated fatty-acid substrates. Can use both linoleic acid (18:2(9Z,12Z)) and alpha-linolenic acid (18:3(9Z,12Z,15Z)) as substrates. This Borago officinalis (Bourrache) protein is Acyl-lipid (9-3)-desaturase.